Here is an 82-residue protein sequence, read N- to C-terminus: MGFRLPGIRKASKAADAPKGYLAVYVGEKLKRFVIPVSYLNQPSFQDLLSQAEEEFGYDHPMGGLTIPCSEDVFQCITSCLN.

This sequence belongs to the ARG7 family.

This Glycine max (Soybean) protein is Auxin-induced protein 15A.